The primary structure comprises 921 residues: Probable dipeptidyl-aminopeptidase B (921 aa).

The tract at residues 1-33 is disordered; that stretch reads MAGHTEENAQLLSTEQESVSRHSSDSAASTAST. Residues 1–109 are Cytoplasmic-facing; it reads MAGHTEENAQ…NKSVDKKLRK (109 aa). Positions 8 to 17 are enriched in polar residues; that stretch reads NAQLLSTEQE. The helical; Signal-anchor for type II membrane protein transmembrane segment at 110–130 threads the bilayer; sequence LIWIVGGVFIGAWVLALFIFL. Topologically, residues 131-921 are vacuolar; that stretch reads GKQAYKHSSE…VPLQIDAAKV (791 aa). Asparagine 362 carries an N-linked (GlcNAc...) asparagine glycan. Serine 768 (charge relay system) is an active-site residue. Asparagine 822 carries an N-linked (GlcNAc...) asparagine glycan. Catalysis depends on charge relay system residues aspartate 845 and histidine 878.

It belongs to the peptidase S9B family.

The protein resides in the vacuole membrane. The catalysed reaction is Release of an N-terminal dipeptide, Xaa-Yaa-|-Zaa-, from a polypeptide, preferentially when Yaa is Pro, provided Zaa is neither Pro nor hydroxyproline.. Functionally, type IV dipeptidyl-peptidase which removes N-terminal dipeptides sequentially from polypeptides having unsubstituted N-termini provided that the penultimate residue is proline. In Sclerotinia sclerotiorum (strain ATCC 18683 / 1980 / Ss-1) (White mold), this protein is Probable dipeptidyl-aminopeptidase B (dapB).